Consider the following 197-residue polypeptide: Putative eggshell protein (197 aa).

The first 17 residues, 1–17, serve as a signal peptide directing secretion; it reads MKFHLVLLLAIVPLTLA.

The protein is Putative eggshell protein of Fasciola hepatica (Liver fluke).